Reading from the N-terminus, the 161-residue chain is Cyclic pyranopterin monophosphate synthase (161 aa).

Residues L75–H77 and M113–E114 each bind substrate. D128 is an active-site residue.

The protein belongs to the MoaC family. As to quaternary structure, homohexamer; trimer of dimers.

It carries out the reaction (8S)-3',8-cyclo-7,8-dihydroguanosine 5'-triphosphate = cyclic pyranopterin phosphate + diphosphate. Its pathway is cofactor biosynthesis; molybdopterin biosynthesis. Its function is as follows. Catalyzes the conversion of (8S)-3',8-cyclo-7,8-dihydroguanosine 5'-triphosphate to cyclic pyranopterin monophosphate (cPMP). The chain is Cyclic pyranopterin monophosphate synthase from Salmonella arizonae (strain ATCC BAA-731 / CDC346-86 / RSK2980).